Here is a 251-residue protein sequence, read N- to C-terminus: Hydroxyacylglutathione hydrolase (251 aa).

Residues His-53, His-55, Asp-57, His-58, His-110, Asp-127, and His-165 each contribute to the Zn(2+) site.

This sequence belongs to the metallo-beta-lactamase superfamily. Glyoxalase II family. In terms of assembly, monomer. Requires Zn(2+) as cofactor.

The enzyme catalyses an S-(2-hydroxyacyl)glutathione + H2O = a 2-hydroxy carboxylate + glutathione + H(+). It participates in secondary metabolite metabolism; methylglyoxal degradation; (R)-lactate from methylglyoxal: step 2/2. Thiolesterase that catalyzes the hydrolysis of S-D-lactoyl-glutathione to form glutathione and D-lactic acid. The sequence is that of Hydroxyacylglutathione hydrolase from Edwardsiella ictaluri (strain 93-146).